A 343-amino-acid chain; its full sequence is TATA box-binding protein-like 2 (343 aa).

Residues 71 to 152 (PDEVTQENKD…SDSLSLASIT (82 aa)) form a disordered region. Residues 76–90 (QENKDQPVISKHETE) are compositionally biased toward basic and acidic residues. The span at 94–127 (ESQSPQSRLPSPSEQDVGLGLNSSSLSNSHSQLH) shows a compositional bias: low complexity. The segment covering 143–152 (SDSLSLASIT) has biased composition (polar residues).

This sequence belongs to the TBP family. As to quaternary structure, interacts with TAF3. In terms of tissue distribution, ubiquitously expressed in all tissues examined with highest levels in heart, lung, ovary, spleen and testes.

The protein resides in the cytoplasm. It is found in the nucleus. Its function is as follows. Transcription factor required in complex with TAF3 for the differentiation of myoblasts into myocytes. The complex replaces TFIID at specific promoters at an early stage in the differentiation process. The protein is TATA box-binding protein-like 2 of Homo sapiens (Human).